A 212-amino-acid polypeptide reads, in one-letter code: MTTKKKAIMGIKIGMTQIFDENDKAVPVSIIEAGPCTVLQKKKVESDGYESIQVGFYNLKEKLANKPARGHFKKANVKPLRYIKEFRIDNVDDYDVGQEITADIFTTGDLVDVIGTSKGKGFAGGVKRHNFARGSMGHGSKYHRRPGSLGAKGPARVFKGRKLPGRLGGERVTVQGLKVVKVYPDRNLILIKGSIPGPKRGFVIIKNSVKEK.

The disordered stretch occupies residues 133–152 (RGSMGHGSKYHRRPGSLGAK).

Belongs to the universal ribosomal protein uL3 family. In terms of assembly, part of the 50S ribosomal subunit. Forms a cluster with proteins L14 and L19.

One of the primary rRNA binding proteins, it binds directly near the 3'-end of the 23S rRNA, where it nucleates assembly of the 50S subunit. This is Large ribosomal subunit protein uL3 from Syntrophomonas wolfei subsp. wolfei (strain DSM 2245B / Goettingen).